The chain runs to 345 residues: Beta-2-glycoprotein 1 (345 aa).

A signal peptide spans 1 to 19 (MISPVLILFSSFLCHVAIA). Sushi domains lie at 21–81 (RTCP…KCTP), 82–139 (RVCP…VCAP), 140–202 (IICP…ECRE), and 203–262 (VKCP…SCKA). 11 cysteine pairs are disulfide-bonded: cysteine 23-cysteine 66, cysteine 51-cysteine 79, cysteine 84-cysteine 124, cysteine 110-cysteine 137, cysteine 142-cysteine 188, cysteine 174-cysteine 200, cysteine 205-cysteine 248, cysteine 234-cysteine 260, cysteine 264-cysteine 315, cysteine 300-cysteine 325, and cysteine 307-cysteine 345. A glycan (O-linked (GalNAc...) threonine) is linked at threonine 33. A glycan (O-linked (GalNAc...) threonine) is linked at threonine 149. Asparagine 162 carries N-linked (GlcNAc...) (complex) asparagine glycosylation. N-linked (GlcNAc...) asparagine glycans are attached at residues asparagine 183 and asparagine 193. N-linked (GlcNAc...) asparagine glycosylation is present at asparagine 253. The segment at 263–345 (SCKVPVKKAT…KTDASDVKPC (83 aa)) is sushi-like.

N- and O-glycosylated. PubMed:6587378 also reports glycosylation on 'Asn-188' for their allele. As to expression, expressed by the liver and secreted in plasma.

The protein resides in the secreted. Its function is as follows. Binds to various kinds of negatively charged substances such as heparin, phospholipids, and dextran sulfate. May prevent activation of the intrinsic blood coagulation cascade by binding to phospholipids on the surface of damaged cells. In Homo sapiens (Human), this protein is Beta-2-glycoprotein 1 (APOH).